A 522-amino-acid polypeptide reads, in one-letter code: Anthranilate synthase component 1 (522 aa).

L-tryptophan contacts are provided by residues serine 40 and 292 to 294; that span reads PYM. Residue 329–330 participates in chorismate binding; it reads GT. A Mg(2+)-binding site is contributed by glutamate 362. Chorismate contacts are provided by residues tyrosine 450, arginine 470, 484–486, and glycine 486; that span reads GAG. Glutamate 499 serves as a coordination point for Mg(2+).

This sequence belongs to the anthranilate synthase component I family. As to quaternary structure, heterotetramer consisting of two non-identical subunits: a beta subunit (TrpG) and a large alpha subunit (TrpE). The cofactor is Mg(2+).

The enzyme catalyses chorismate + L-glutamine = anthranilate + pyruvate + L-glutamate + H(+). Its pathway is amino-acid biosynthesis; L-tryptophan biosynthesis; L-tryptophan from chorismate: step 1/5. With respect to regulation, feedback inhibited by tryptophan. Its function is as follows. Part of a heterotetrameric complex that catalyzes the two-step biosynthesis of anthranilate, an intermediate in the biosynthesis of L-tryptophan. In the first step, the glutamine-binding beta subunit (TrpG) of anthranilate synthase (AS) provides the glutamine amidotransferase activity which generates ammonia as a substrate that, along with chorismate, is used in the second step, catalyzed by the large alpha subunit of AS (TrpE) to produce anthranilate. In the absence of TrpG, TrpE can synthesize anthranilate directly from chorismate and high concentrations of ammonia. This is Anthranilate synthase component 1 (trpE) from Buchnera aphidicola subsp. Baizongia pistaciae (strain Bp).